The chain runs to 891 residues: Fanconi-associated nuclease 1 homolog (891 aa).

Glu-712, Asp-833, Glu-852, and Val-853 together coordinate Mn(2+). Residues 770 to 884 form the VRR-NUC domain; it reads GMAEEILIIS…GFNVEICKVR (115 aa).

It belongs to the FAN1 family. Requires Mn(2+) as cofactor. The cofactor is Mg(2+).

It is found in the nucleus. The catalysed reaction is Hydrolytically removes 5'-nucleotides successively from the 3'-hydroxy termini of 3'-hydroxy-terminated oligonucleotides.. Nuclease required for the repair of DNA interstrand cross-links (ICLs). Acts as a 5'-3' exonuclease that anchors at a cut end of DNA and cleaves DNA successively at every third nucleotide, allowing to excise an ICL from one strand through flanking incisions. May act upstream of the helicase RECQL4A and the ATPase RAD5A, which is involved in error-free post-replicative repair. Functions independently of MUS81 pathway, but in a similar pathway with RECQ4A, RAD5A and MFH1 in ICL repair. This is Fanconi-associated nuclease 1 homolog from Arabidopsis thaliana (Mouse-ear cress).